The chain runs to 81 residues: MKTLLLTLVVVTIVCLDLGNSLKCYVSREGETQTCPEGEKLCEKYAVSYFHDGRWRYRYECTSACHRGPYNVCCSTDLCNK.

The first 21 residues, 1 to 21, serve as a signal peptide directing secretion; that stretch reads MKTLLLTLVVVTIVCLDLGNS. Cystine bridges form between Cys-24-Cys-42, Cys-35-Cys-61, Cys-65-Cys-73, and Cys-74-Cys-79.

Belongs to the three-finger toxin family. Short-chain subfamily. In terms of tissue distribution, expressed by the venom gland.

The protein localises to the secreted. In terms of biological role, snake venom neurotoxin that blocks neuromuscular transmission, presenting a postsynaptic action through the nicotinic acetylcholine receptor (nAChR). Has no cytotoxic activity. In Micrurus mipartitus (Red-tailed coral snake), this protein is Mipartoxin-1A.